The chain runs to 361 residues: Probable mannitol dehydrogenase (361 aa).

Positions 51, 73, 104, 107, 110, 118, and 167 each coordinate Zn(2+).

This sequence belongs to the zinc-containing alcohol dehydrogenase family. Requires Zn(2+) as cofactor.

The catalysed reaction is D-mannitol + NAD(+) = D-mannose + NADH + H(+). Functionally, oxidizes mannitol to mannose. Provides the initial step by which translocated mannitol is committed to central metabolism and, by regulating mannitol pool size, is important in regulating salt tolerance at the cellular level. This is Probable mannitol dehydrogenase (ELI3) from Mesembryanthemum crystallinum (Common ice plant).